We begin with the raw amino-acid sequence, 100 residues long: Aspartyl/glutamyl-tRNA(Asn/Gln) amidotransferase subunit C (100 aa).

Belongs to the GatC family. As to quaternary structure, heterotrimer of A, B and C subunits.

The enzyme catalyses L-glutamyl-tRNA(Gln) + L-glutamine + ATP + H2O = L-glutaminyl-tRNA(Gln) + L-glutamate + ADP + phosphate + H(+). It catalyses the reaction L-aspartyl-tRNA(Asn) + L-glutamine + ATP + H2O = L-asparaginyl-tRNA(Asn) + L-glutamate + ADP + phosphate + 2 H(+). Allows the formation of correctly charged Asn-tRNA(Asn) or Gln-tRNA(Gln) through the transamidation of misacylated Asp-tRNA(Asn) or Glu-tRNA(Gln) in organisms which lack either or both of asparaginyl-tRNA or glutaminyl-tRNA synthetases. The reaction takes place in the presence of glutamine and ATP through an activated phospho-Asp-tRNA(Asn) or phospho-Glu-tRNA(Gln). The sequence is that of Aspartyl/glutamyl-tRNA(Asn/Gln) amidotransferase subunit C from Dictyoglomus thermophilum (strain ATCC 35947 / DSM 3960 / H-6-12).